Consider the following 66-residue polypeptide: Large ribosomal subunit protein bL35 (66 aa).

Basic residues-rich tracts occupy residues 1 to 15 and 27 to 40; these read MPKLKTKSGAKKRFK and AGKRHGMIKRTKKQ. A disordered region spans residues 1 to 40; that stretch reads MPKLKTKSGAKKRFKVTGTGKVMSAHAGKRHGMIKRTKKQ.

This sequence belongs to the bacterial ribosomal protein bL35 family.

In Rhodopseudomonas palustris (strain BisA53), this protein is Large ribosomal subunit protein bL35.